A 94-amino-acid chain; its full sequence is Pyrimidine/purine nucleoside phosphorylase (94 aa).

The protein belongs to the nucleoside phosphorylase PpnP family.

The enzyme catalyses a purine D-ribonucleoside + phosphate = a purine nucleobase + alpha-D-ribose 1-phosphate. It carries out the reaction adenosine + phosphate = alpha-D-ribose 1-phosphate + adenine. It catalyses the reaction cytidine + phosphate = cytosine + alpha-D-ribose 1-phosphate. The catalysed reaction is guanosine + phosphate = alpha-D-ribose 1-phosphate + guanine. The enzyme catalyses inosine + phosphate = alpha-D-ribose 1-phosphate + hypoxanthine. It carries out the reaction thymidine + phosphate = 2-deoxy-alpha-D-ribose 1-phosphate + thymine. It catalyses the reaction uridine + phosphate = alpha-D-ribose 1-phosphate + uracil. The catalysed reaction is xanthosine + phosphate = alpha-D-ribose 1-phosphate + xanthine. Its function is as follows. Catalyzes the phosphorolysis of diverse nucleosides, yielding D-ribose 1-phosphate and the respective free bases. Can use uridine, adenosine, guanosine, cytidine, thymidine, inosine and xanthosine as substrates. Also catalyzes the reverse reactions. The chain is Pyrimidine/purine nucleoside phosphorylase from Salmonella heidelberg (strain SL476).